A 334-amino-acid chain; its full sequence is N,N'-diacetyllegionaminic acid synthase (334 aa).

Residues 282 to 334 (SLVAKKDIKKGEIFSEGNLTTKRPANGISAMRYEEFLGKIATKNYKEDELIRE) enclose the AFP-like domain.

The catalysed reaction is 2,4-diacetamido-2,4,6-trideoxy-alpha-D-mannopyranose + phosphoenolpyruvate + H2O = N,N-diacetyllegionaminate + phosphate. Involved in biosynthesis of legionaminic acid (5,7-diamino-3,5,7,9-tetradeoxy-D-glycero-D-galacto-non-2-ulosonic acid)(Leg), a sialic acid-like derivative that is incorporated into flagellin via O-linkage to Ser/Thr. Catalyzes the condensation of 2,4-diacetamido-2,4,6-trideoxymannose with phosphoenolpyruvate (PEP) to give N,N'-diacetyllegionaminic acid. The polypeptide is N,N'-diacetyllegionaminic acid synthase (legI) (Campylobacter jejuni subsp. jejuni serotype O:2 (strain ATCC 700819 / NCTC 11168)).